A 400-amino-acid chain; its full sequence is Acetyl-CoA decarbonylase/synthase complex subunit delta (400 aa).

Belongs to the CdhD family. In terms of assembly, heterodimer of delta and gamma chains. The ACDS complex is made up of alpha, epsilon, beta, gamma and delta chains with a probable stoichiometry of (alpha(2)epsilon(2))(4)-beta(8)-(gamma(1)delta(1))(8).

In terms of biological role, part of a complex that catalyzes the reversible cleavage of acetyl-CoA, allowing autotrophic growth from CO(2). Probably maintains the overall quaternary structure of the ACDS complex. This is Acetyl-CoA decarbonylase/synthase complex subunit delta from Methanopyrus kandleri (strain AV19 / DSM 6324 / JCM 9639 / NBRC 100938).